The sequence spans 314 residues: Serine acetyltransferase 1, chloroplastic (314 aa).

It belongs to the transferase hexapeptide repeat family. In terms of assembly, homomultimer. Interacts with OASA1 and CYP20-3. Component of the cysteine synthase complex (CSC) composed of two OAS-TL dimers and one SAT hexamer. In terms of tissue distribution, mostly expressed in leaves. Localized in cortex, trichomes and vascular tissues, particularly in phloem.

Its subcellular location is the plastid. The protein localises to the chloroplast. It localises to the cytoplasm. The enzyme catalyses L-serine + acetyl-CoA = O-acetyl-L-serine + CoA. Its pathway is amino-acid biosynthesis; L-cysteine biosynthesis; L-cysteine from L-serine: step 1/2. Serine acetyltransferase which catalyzes the formation of O-acetyl-L-serine from acetyl-CoA and L-serine. Also displays O-acetylserine (thio1)-lyase activity in vitro. May be involved in detoxification process by mediating the production of glutathione. This chain is Serine acetyltransferase 1, chloroplastic (SAT1), found in Arabidopsis thaliana (Mouse-ear cress).